We begin with the raw amino-acid sequence, 367 residues long: Aminomethyltransferase (367 aa).

It belongs to the GcvT family. As to quaternary structure, the glycine cleavage system is composed of four proteins: P, T, L and H.

It carries out the reaction N(6)-[(R)-S(8)-aminomethyldihydrolipoyl]-L-lysyl-[protein] + (6S)-5,6,7,8-tetrahydrofolate = N(6)-[(R)-dihydrolipoyl]-L-lysyl-[protein] + (6R)-5,10-methylene-5,6,7,8-tetrahydrofolate + NH4(+). Its function is as follows. The glycine cleavage system catalyzes the degradation of glycine. The protein is Aminomethyltransferase of Mycobacterium bovis (strain ATCC BAA-935 / AF2122/97).